Here is a 274-residue protein sequence, read N- to C-terminus: MSDLYCVFGNPIAHSKSPAIHAAFAVQTAQDLRYEARLAALDGFGLAIAEFVAVGGKGANVTVPFKEEAYRLATRLSDRAARAGAVNTLVFDGPEVFGDNTDGAGLVRDITNNLGFSLVGKRILLLGAGGASRGVIAPLLAEKPASLIIANRSADKAVALAQAFADMAPLGGGSFAETAGKSFDLVINATSASLSGASLPLPPGIFAPGSLAYDMMYGKGETPFLTLARQQGAARCADGLGMLVEQAAEAFFVWRGIRPGTAQVLAELRAKLVA.

Residues 15–17 and Thr-62 contribute to the shikimate site; that span reads SKS. Lys-66 serves as the catalytic Proton acceptor. Asp-78 lines the NADP(+) pocket. Residues Asn-87 and Asp-102 each coordinate shikimate. Residues 127–131 and Met-215 contribute to the NADP(+) site; that span reads GAGGA. Position 217 (Tyr-217) interacts with shikimate. NADP(+) is bound at residue Gly-239.

Belongs to the shikimate dehydrogenase family. As to quaternary structure, homodimer.

It catalyses the reaction shikimate + NADP(+) = 3-dehydroshikimate + NADPH + H(+). It functions in the pathway metabolic intermediate biosynthesis; chorismate biosynthesis; chorismate from D-erythrose 4-phosphate and phosphoenolpyruvate: step 4/7. In terms of biological role, involved in the biosynthesis of the chorismate, which leads to the biosynthesis of aromatic amino acids. Catalyzes the reversible NADPH linked reduction of 3-dehydroshikimate (DHSA) to yield shikimate (SA). This is Shikimate dehydrogenase (NADP(+)) from Dechloromonas aromatica (strain RCB).